The following is an 85-amino-acid chain: UPF0512 protein U (85 aa).

The protein belongs to the UPF0512 family.

The chain is UPF0512 protein U from Dictyostelium discoideum (Social amoeba).